Consider the following 301-residue polypeptide: Acetylglutamate kinase (301 aa).

Residues 72-73, Arg94, and Asn199 contribute to the substrate site; that span reads GG.

Belongs to the acetylglutamate kinase family. ArgB subfamily.

The protein localises to the cytoplasm. The enzyme catalyses N-acetyl-L-glutamate + ATP = N-acetyl-L-glutamyl 5-phosphate + ADP. The protein operates within amino-acid biosynthesis; L-arginine biosynthesis; N(2)-acetyl-L-ornithine from L-glutamate: step 2/4. Its function is as follows. Catalyzes the ATP-dependent phosphorylation of N-acetyl-L-glutamate. This Bartonella quintana (strain Toulouse) (Rochalimaea quintana) protein is Acetylglutamate kinase.